A 329-amino-acid polypeptide reads, in one-letter code: tRNA-modifying protein YgfZ (329 aa).

Positions 32 and 190 each coordinate folate.

It belongs to the tRNA-modifying YgfZ family.

The protein resides in the cytoplasm. In terms of biological role, folate-binding protein involved in regulating the level of ATP-DnaA and in the modification of some tRNAs. It is probably a key factor in regulatory networks that act via tRNA modification, such as initiation of chromosomal replication. The chain is tRNA-modifying protein YgfZ from Photobacterium profundum (strain SS9).